The following is a 356-amino-acid chain: Phosphate acyltransferase (356 aa).

The protein belongs to the PlsX family. In terms of assembly, homodimer. Probably interacts with PlsY.

It is found in the cytoplasm. It catalyses the reaction a fatty acyl-[ACP] + phosphate = an acyl phosphate + holo-[ACP]. The protein operates within lipid metabolism; phospholipid metabolism. Its function is as follows. Catalyzes the reversible formation of acyl-phosphate (acyl-PO(4)) from acyl-[acyl-carrier-protein] (acyl-ACP). This enzyme utilizes acyl-ACP as fatty acyl donor, but not acyl-CoA. The sequence is that of Phosphate acyltransferase from Escherichia coli (strain K12 / DH10B).